Reading from the N-terminus, the 152-residue chain is UPF0756 membrane protein JDM1_1594 (152 aa).

Transmembrane regions (helical) follow at residues 25-45, 52-72, 85-105, and 115-135; these read ATVV…LTTI, WGVT…QIGF, WIAV…VGLL, and LVFG…GPII.

It belongs to the UPF0756 family.

Its subcellular location is the cell membrane. This is UPF0756 membrane protein JDM1_1594 from Lactiplantibacillus plantarum (strain JDM1) (Lactobacillus plantarum).